A 205-amino-acid chain; its full sequence is High frequency lysogenization protein HflD homolog (205 aa).

This sequence belongs to the HflD family.

The protein localises to the cytoplasm. It localises to the cell inner membrane. In Aliivibrio fischeri (strain ATCC 700601 / ES114) (Vibrio fischeri), this protein is High frequency lysogenization protein HflD homolog.